The following is a 593-amino-acid chain: Arginine--tRNA ligase (593 aa).

The short motif at 138–148 is the 'HIGH' region element; it reads ANPTGPLHVGH.

Belongs to the class-I aminoacyl-tRNA synthetase family. As to quaternary structure, monomer.

Its subcellular location is the cytoplasm. The enzyme catalyses tRNA(Arg) + L-arginine + ATP = L-arginyl-tRNA(Arg) + AMP + diphosphate. This is Arginine--tRNA ligase from Burkholderia cenocepacia (strain ATCC BAA-245 / DSM 16553 / LMG 16656 / NCTC 13227 / J2315 / CF5610) (Burkholderia cepacia (strain J2315)).